The following is a 120-amino-acid chain: MAISSFKHEHPLEKRQAEAARIREKYPDRIPVIVERAEKSDVPDIDRKKYLVPADLTVGQFVYVVRKRIKLSPEKAIFIFVKNILPPTAAIMSAIYEEHKDEDGFLYMSYSGENTFGIFF.

Gly-117 is lipidated: Phosphatidylethanolamine amidated glycine. Residues 118–120 (IFF) constitute a propeptide, removed in mature form.

Belongs to the ATG8 family. In terms of assembly, interacts with ATG4B. Interacts with NBR1. In terms of processing, the C-terminal 3 residues are removed by ATG4 to expose Gly-117 at the C-terminus. This Gly-117 forms then a thioester bond with the 'Cys-558' of ATG7 (E1-like activating enzyme) before being transferred to the 'Cys-258' of ATG3 (the specific E2 conjugating enzyme), in order to be finally amidated with phosphatidylethanolamine. This lipid modification anchors ATG8 to autophagosomes. As to expression, constitutively expressed.

Its subcellular location is the cytoplasmic vesicle. The protein localises to the autophagosome membrane. The protein resides in the vacuole membrane. It is found in the cytoplasm. It localises to the cytoskeleton. Ubiquitin-like modifier involved in autophagosomes formation. May mediate the delivery of the autophagosomes to the vacuole via the microtubule cytoskeleton. The sequence is that of Autophagy-related protein 8d (ATG8D) from Arabidopsis thaliana (Mouse-ear cress).